The primary structure comprises 49 residues: Astexin-3 (49 aa).

A propeptide spanning residues 1–25 (MRTYNRSLPARAGLTDLGKVTTHTK) is cleaved from the precursor. A cross-link (isoaspartyl glycine isopeptide (Gly-Asp)) is located at residues 26 to 34 (GPTPMVGLD).

This lasso peptide is hydrolyzed to a linear form by the isopeptidase AtxE2, in vitro. The isopeptidase AtxE2 only recognizes the threaded form (but not the unthreaded form).

Its subcellular location is the cytoplasm. The protein localises to the secreted. Functionally, shows weak antimicrobial activity against its phylogenetic relative Caulobacter crescentus. Does not show activity against other bacteria tested (E.coli, Vibrio sp, Burkhoderia thailandensis, and Salmonella newport). The chain is Astexin-3 from Asticcacaulis excentricus (strain ATCC 15261 / DSM 4724 / KCTC 12464 / NCIMB 9791 / VKM B-1370 / CB 48).